The following is a 461-amino-acid chain: Photosystem II CP43 reaction center protein (461 aa).

Positions 1–2 (ME) are excised as a propeptide. Threonine 3 carries the N-acetylthreonine modification. Threonine 3 is subject to Phosphothreonine. A run of 5 helical transmembrane segments spans residues 57-81 (LFEV…PHLA), 122-143 (LIGP…KDKN), 166-188 (KAMY…RIIT), 243-263 (QPWA…LSYS), and 279-300 (WFNN…ASQS). Glutamate 355 lines the [CaMn4O5] cluster pocket. A helical membrane pass occupies residues 435 to 459 (RARAAAAGFEKGIDRLTEPVLSLKP).

The protein belongs to the PsbB/PsbC family. PsbC subfamily. In terms of assembly, PSII is composed of 1 copy each of membrane proteins PsbA, PsbB, PsbC, PsbD, PsbE, PsbF, PsbH, PsbI, PsbJ, PsbK, PsbL, PsbM, PsbT, PsbX, PsbY, PsbZ, Psb30/Ycf12, at least 3 peripheral proteins of the oxygen-evolving complex and a large number of cofactors. It forms dimeric complexes. Requires Binds multiple chlorophylls and provides some of the ligands for the Ca-4Mn-5O cluster of the oxygen-evolving complex. It may also provide a ligand for a Cl- that is required for oxygen evolution. PSII binds additional chlorophylls, carotenoids and specific lipids. as cofactor.

The protein localises to the plastid. It is found in the chloroplast thylakoid membrane. In terms of biological role, one of the components of the core complex of photosystem II (PSII). It binds chlorophyll and helps catalyze the primary light-induced photochemical processes of PSII. PSII is a light-driven water:plastoquinone oxidoreductase, using light energy to abstract electrons from H(2)O, generating O(2) and a proton gradient subsequently used for ATP formation. The chain is Photosystem II CP43 reaction center protein from Stigeoclonium helveticum (Green alga).